The chain runs to 336 residues: MHWPPEFGKVFMILEDGFSRRFHYLRLSVTEACNFRCTYCLPDGYRPDGRKSFLTVDEIRRVVYGFAELGVKKIRLTGGEPSMRRDLPAIIETVANTAGIEKVAMTTNGYRLKDRAQQWFDAGLRSLNVSIDSLDPRQFQLITGENKLVEILEGLEAAQKAGFRKIKVNTVLLKNLNDHELSQFLFWLKKQPIQLRLIELMQTGEMDARFQKHHQSGLPVKTRLLREGWTQQNRNLTDGPAEVFSHPDYQGQIGLIMPYSKDFCTNCNRLRVSSVGKLHLCLFGEEGVPLRDLLQADEQNSELQSRILEGLTHKRETHFLHDGDSGVTPHLASIGG.

In terms of domain architecture, Radical SAM core spans 17–238 (GFSRRFHYLR…WTQQNRNLTD (222 aa)). Position 26 (Arg26) interacts with GTP. Positions 33 and 37 each coordinate [4Fe-4S] cluster. Tyr39 provides a ligand contact to S-adenosyl-L-methionine. Position 40 (Cys40) interacts with [4Fe-4S] cluster. Residue Arg75 coordinates GTP. S-adenosyl-L-methionine is bound at residue Gly79. Thr106 lines the GTP pocket. Ser130 is a binding site for S-adenosyl-L-methionine. Lys167 contributes to the GTP binding site. S-adenosyl-L-methionine is bound at residue Met201. Residues Cys264 and Cys267 each coordinate [4Fe-4S] cluster. 269–271 (RLR) contacts GTP. Residue Cys281 participates in [4Fe-4S] cluster binding.

This sequence belongs to the radical SAM superfamily. MoaA family. In terms of assembly, monomer and homodimer. It depends on [4Fe-4S] cluster as a cofactor.

The catalysed reaction is GTP + AH2 + S-adenosyl-L-methionine = (8S)-3',8-cyclo-7,8-dihydroguanosine 5'-triphosphate + 5'-deoxyadenosine + L-methionine + A + H(+). It functions in the pathway cofactor biosynthesis; molybdopterin biosynthesis. Functionally, catalyzes the cyclization of GTP to (8S)-3',8-cyclo-7,8-dihydroguanosine 5'-triphosphate. In Tolumonas auensis (strain DSM 9187 / NBRC 110442 / TA 4), this protein is GTP 3',8-cyclase.